A 215-amino-acid polypeptide reads, in one-letter code: Heart- and neural crest derivatives-expressed protein 1 (215 aa).

Disordered regions lie at residues 53-109 (APDF…RTES) and 169-202 (VDGG…KGRT). Residues 65–75 (AAAAAATYGPD) show a composition bias toward low complexity. Residues 92–104 (LGRRKGSGPKKER) show a composition bias toward basic residues. Residues 94–146 (RRKGSGPKKERRRTESINSAFAELRECIPNVPADTKLSKIKTLRLATSYIAYL) enclose the bHLH domain. At threonine 107 the chain carries Phosphothreonine; by PLK4. Serine 109 carries the phosphoserine; by PLK4 modification.

Efficient DNA binding requires dimerization with another bHLH protein. Forms homodimers and heterodimers with TCF3 gene products E12 and E47, HAND2 and HEY1, HEY2 and HEYL (hairy-related transcription factors). Interacts with MDFIC. Interacts with SOX15; the interaction enhances HAND1-induced differentiation of trophoblast giant cells. In terms of processing, phosphorylation by PLK4 disrupts the interaction with MDFIC and leads to translocation into the nucleoplasm, allowing dimerization and transcription factor activity.

It localises to the nucleus. Its subcellular location is the nucleoplasm. The protein resides in the nucleolus. Transcription factor that plays an essential role in both trophoblast giant cell differentiation and in cardiac morphogenesis. Binds the DNA sequence 5'-NRTCTG-3' (non-canonical E-box). Acts as a transcriptional repressor of SOX15. In the adult, could be required for ongoing expression of cardiac-specific genes. The polypeptide is Heart- and neural crest derivatives-expressed protein 1 (HAND1) (Oryctolagus cuniculus (Rabbit)).